Reading from the N-terminus, the 170-residue chain is Cytochrome c-type biogenesis protein CcmE (170 aa).

Over 1 to 7 the chain is Cytoplasmic; that stretch reads MTRKQRR. Residues 8–28 traverse the membrane as a helical; Signal-anchor for type II membrane protein segment; that stretch reads LTIIGGALFVLAVAAGLVLNA. Residues 29 to 170 lie on the Periplasmic side of the membrane; it reads LRDSIVFFST…GEKTAAGATQ (142 aa). The heme site is built by H122 and Y126. Residues 137 to 146 are compositionally biased toward basic and acidic residues; that stretch reads KQGHWKDDYG. Residues 137 to 170 form a disordered region; it reads KQGHWKDDYGKPQAAKPGPVSMREGEKTAAGATQ.

The protein belongs to the CcmE/CycJ family.

It localises to the cell inner membrane. Its function is as follows. Heme chaperone required for the biogenesis of c-type cytochromes. Transiently binds heme delivered by CcmC and transfers the heme to apo-cytochromes in a process facilitated by CcmF and CcmH. In Bradyrhizobium sp. (strain BTAi1 / ATCC BAA-1182), this protein is Cytochrome c-type biogenesis protein CcmE.